We begin with the raw amino-acid sequence, 206 residues long: MARYLGPKLKLSRREGTDLFLKSGVRAIDSKCKIEQAPGQHGARKPRLSDYGVQLREKQKVRRIYGVLERQFRNYYKEAARLKGNTGANLLQLLEGRLDNVVYRMGFGATRAEARQMVSHKAIMVNGRVVSIASYQVSPNDVVSIREKAKKQSRVKAALELAEQREKPTWLEVDAAKMEGVFKRIPERTDLSADINEHLIVELYSK.

Positions 96-156 (GRLDNVVYRM…EKAKKQSRVK (61 aa)) constitute an S4 RNA-binding domain.

This sequence belongs to the universal ribosomal protein uS4 family. Part of the 30S ribosomal subunit. Contacts protein S5. The interaction surface between S4 and S5 is involved in control of translational fidelity.

In terms of biological role, one of the primary rRNA binding proteins, it binds directly to 16S rRNA where it nucleates assembly of the body of the 30S subunit. With S5 and S12 plays an important role in translational accuracy. The polypeptide is Small ribosomal subunit protein uS4 (Pectobacterium atrosepticum (strain SCRI 1043 / ATCC BAA-672) (Erwinia carotovora subsp. atroseptica)).